The primary structure comprises 416 residues: Glutamyl-tRNA reductase (416 aa).

Residues 50–53 (TCNR), Ser-109, 114–116 (EPQ), and Gln-120 contribute to the substrate site. Cys-51 serves as the catalytic Nucleophile. NADP(+) is bound at residue 189–194 (GAGEMI).

Belongs to the glutamyl-tRNA reductase family. As to quaternary structure, homodimer.

It carries out the reaction (S)-4-amino-5-oxopentanoate + tRNA(Glu) + NADP(+) = L-glutamyl-tRNA(Glu) + NADPH + H(+). The protein operates within porphyrin-containing compound metabolism; protoporphyrin-IX biosynthesis; 5-aminolevulinate from L-glutamyl-tRNA(Glu): step 1/2. Functionally, catalyzes the NADPH-dependent reduction of glutamyl-tRNA(Glu) to glutamate 1-semialdehyde (GSA). The chain is Glutamyl-tRNA reductase from Vesicomyosocius okutanii subsp. Calyptogena okutanii (strain HA).